The primary structure comprises 357 residues: Holliday junction branch migration complex subunit RuvB (357 aa).

The tract at residues 3 to 193 is large ATPase domain (RuvB-L); the sequence is WDDTTDAEAA…FGFTAHMEFY (191 aa). Residues L32, R33, G74, K77, T78, T79, 140–142, R183, Y193, and R230 contribute to the ATP site; that span reads EDF. T78 is a Mg(2+) binding site. Residues 194–264 are small ATPAse domain (RuvB-S); that stretch reads GPAELERVIH…IAAAALAVYE (71 aa). Residues 267–357 form a head domain (RuvB-H) region; the sequence is ARGLDRLDRG…GNGQPDLFGA (91 aa). DNA is bound by residues R303, R322, and R327. A disordered region spans residues 337–357; the sequence is LGLTPPRPQSSGNGQPDLFGA.

It belongs to the RuvB family. In terms of assembly, homohexamer. Forms an RuvA(8)-RuvB(12)-Holliday junction (HJ) complex. HJ DNA is sandwiched between 2 RuvA tetramers; dsDNA enters through RuvA and exits via RuvB. An RuvB hexamer assembles on each DNA strand where it exits the tetramer. Each RuvB hexamer is contacted by two RuvA subunits (via domain III) on 2 adjacent RuvB subunits; this complex drives branch migration. In the full resolvosome a probable DNA-RuvA(4)-RuvB(12)-RuvC(2) complex forms which resolves the HJ.

The protein resides in the cytoplasm. It carries out the reaction ATP + H2O = ADP + phosphate + H(+). Its function is as follows. The RuvA-RuvB-RuvC complex processes Holliday junction (HJ) DNA during genetic recombination and DNA repair, while the RuvA-RuvB complex plays an important role in the rescue of blocked DNA replication forks via replication fork reversal (RFR). RuvA specifically binds to HJ cruciform DNA, conferring on it an open structure. The RuvB hexamer acts as an ATP-dependent pump, pulling dsDNA into and through the RuvAB complex. RuvB forms 2 homohexamers on either side of HJ DNA bound by 1 or 2 RuvA tetramers; 4 subunits per hexamer contact DNA at a time. Coordinated motions by a converter formed by DNA-disengaged RuvB subunits stimulates ATP hydrolysis and nucleotide exchange. Immobilization of the converter enables RuvB to convert the ATP-contained energy into a lever motion, pulling 2 nucleotides of DNA out of the RuvA tetramer per ATP hydrolyzed, thus driving DNA branch migration. The RuvB motors rotate together with the DNA substrate, which together with the progressing nucleotide cycle form the mechanistic basis for DNA recombination by continuous HJ branch migration. Branch migration allows RuvC to scan DNA until it finds its consensus sequence, where it cleaves and resolves cruciform DNA. This is Holliday junction branch migration complex subunit RuvB from Streptomyces coelicolor (strain ATCC BAA-471 / A3(2) / M145).